The following is a 430-amino-acid chain: Enolase (430 aa).

Residue Gln165 coordinates (2R)-2-phosphoglycerate. The active-site Proton donor is the Glu207. Mg(2+) contacts are provided by Asp244, Glu287, and Asp314. Residues Lys339, Arg368, Ser369, and Lys390 each contribute to the (2R)-2-phosphoglycerate site. Lys339 acts as the Proton acceptor in catalysis.

It belongs to the enolase family. In terms of assembly, component of the RNA degradosome, a multiprotein complex involved in RNA processing and mRNA degradation. The cofactor is Mg(2+).

The protein resides in the cytoplasm. The protein localises to the secreted. It is found in the cell surface. It catalyses the reaction (2R)-2-phosphoglycerate = phosphoenolpyruvate + H2O. Its pathway is carbohydrate degradation; glycolysis; pyruvate from D-glyceraldehyde 3-phosphate: step 4/5. Functionally, catalyzes the reversible conversion of 2-phosphoglycerate (2-PG) into phosphoenolpyruvate (PEP). It is essential for the degradation of carbohydrates via glycolysis. The sequence is that of Enolase from Xanthomonas euvesicatoria pv. vesicatoria (strain 85-10) (Xanthomonas campestris pv. vesicatoria).